We begin with the raw amino-acid sequence, 189 residues long: dCTP deaminase, dUMP-forming (189 aa).

DCTP is bound by residues 101 to 106, D119, 127 to 129, Q148, Y162, and Q174; these read KSSLGR and TLE. E129 acts as the Proton donor/acceptor in catalysis.

Belongs to the dCTP deaminase family. Homotrimer.

It catalyses the reaction dCTP + 2 H2O = dUMP + NH4(+) + diphosphate. It functions in the pathway pyrimidine metabolism; dUMP biosynthesis; dUMP from dCTP: step 1/1. Its function is as follows. Bifunctional enzyme that catalyzes both the deamination of dCTP to dUTP and the hydrolysis of dUTP to dUMP without releasing the toxic dUTP intermediate. In Rhodococcus opacus (strain B4), this protein is dCTP deaminase, dUMP-forming.